The chain runs to 199 residues: Peroxiredoxin-2 (199 aa).

A Thioredoxin domain is found at 7–165 (AHVGKPAPEF…ALRLVQAFQY (159 aa)). Cys52 (cysteine sulfenic acid (-SOH) intermediate) is an active-site residue. Ser113 bears the Phosphoserine mark. Thr183 is modified (phosphothreonine). Lys197 is modified (N6-acetyllysine).

It belongs to the peroxiredoxin family. AhpC/Prx1 subfamily. As to quaternary structure, homodimer; disulfide-linked, upon oxidation. 5 homodimers assemble to form a ring-like decamer. Interacts with TIPIN. Post-translationally, the enzyme can be inactivated by further oxidation of the cysteine sulfenic acid (C(P)-SOH) to sulphinic acid (C(P)-SO2H) instead of its condensation to a disulfide bond. It can be reactivated by forming a transient disulfide bond with sulfiredoxin SRXN1, which reduces the cysteine sulfinic acid in an ATP- and Mg-dependent manner. In terms of processing, acetylation increases resistance to transition to high molecular-mass complexes. Deacetylated by HDAC6 which decreases reducing activity.

The protein localises to the cytoplasm. It carries out the reaction a hydroperoxide + [thioredoxin]-dithiol = an alcohol + [thioredoxin]-disulfide + H2O. Its function is as follows. Thiol-specific peroxidase that catalyzes the reduction of hydrogen peroxide and organic hydroperoxides to water and alcohols, respectively. Plays a role in cell protection against oxidative stress by detoxifying peroxides and as sensor of hydrogen peroxide-mediated signaling events. Might participate in the signaling cascades of growth factors and tumor necrosis factor-alpha by regulating the intracellular concentrations of H(2)O(2). In Bos taurus (Bovine), this protein is Peroxiredoxin-2 (PRDX2).